The primary structure comprises 232 residues: TIR domain-containing adapter molecule 2 (232 aa).

The span at 1-10 shows a compositional bias: basic and acidic residues; sequence MGIGKSKMDP. A disordered region spans residues 1–71; it reads MGIGKSKMDP…VEERPEEDTE (71 aa). Residue Gly-2 is the site of N-myristoyl glycine attachment. Residues 19–29 are compositionally biased toward polar residues; sequence KSQSVDTSQSH. Over residues 30-42 the composition is skewed to basic and acidic residues; that stretch reads HMSDSKQSEEISL. Acidic residues predominate over residues 55–71; that stretch reads PAEEQEGVEERPEEDTE. In terms of domain architecture, TIR spans 70–226; it reads TEEEVFLKFV…AIWKETRNTV (157 aa). Tyr-164 carries the phosphotyrosine modification.

In terms of assembly, homodimer. Interacts with TLR4, TICAM1, IRF3 and IRF7 in response to LPS. Interacts with IL1R1, IL1RAP, IRAK2, IRAK3 and TRAF6. Interacts with protein kinase-inactive mutants of IRAK1 and IRAK4. Isoform 1 interacts with isoform 2; the interaction occurs in late endosomes and disrupts the interaction between isoform 1 and TICAM1. Interacts with MYD88; the interaction decreases after IL-18 stimulation in a time-dependent manner. Interacts with IL18R1 and IL18RAP. Interacts with TLR2. Interacts with RAB11FIP2. In terms of processing, myristoylated. Required for membrane association which is critical for its ability to initiate efficient signaling. Post-translationally, phosphorylated by PRKCE in response to LPS. Phosphorylation is essential for its function. It is depleted from the membrane upon phosphorylation. Tyrosine phosphorylation is inhibited by phosphatase PTPN4.

The protein localises to the cytoplasm. Its subcellular location is the golgi apparatus. It is found in the cell membrane. The protein resides in the endoplasmic reticulum. It localises to the early endosome. The protein localises to the late endosome. Its subcellular location is the cell projection. It is found in the phagocytic cup. Functionally, functions as a sorting adapter in different signaling pathways to facilitate downstream signaling leading to type I interferon induction. In TLR4 signaling, physically bridges TLR4 and TICAM1 and functionally transmits signal to TICAM1 in early endosomes after endocytosis of TLR4. In TLR2 signaling, physically bridges TLR2 and MYD88 and is required for the TLR2-dependent movement of MYD88 to endosomes following ligand engagement. Involved in IL-18 signaling and is proposed to function as a sorting adapter for MYD88 in IL-18 signaling during adaptive immune response. Forms a complex with RAB11FIP2 that is recruited to the phagosomes to promote the activation of the actin-regulatory GTPases RAC1 and CDC42 and subsequent phagocytosis of Gram-negative bacteria. The protein is TIR domain-containing adapter molecule 2 (TICAM2) of Bos taurus (Bovine).